A 140-amino-acid chain; its full sequence is Cysteine proteinase inhibitor 1 (140 aa).

An N-terminal signal peptide occupies residues 1–26; that stretch reads MRKYRVAGLVAALLVLHSLATPSAQA. In terms of domain architecture, Cystatin spans 48–135; sequence GGVEPVGNEN…KELQEFKPVD (88 aa). The Secondary area of contact motif lies at 91–95; sequence QVVAG.

The protein belongs to the cystatin family. Phytocystatin subfamily.

The protein resides in the secreted. There are two distinct cystatins in rice seeds (Oryzacystatin-1 and -2) with different specificities against cysteine proteinases. May be involved in the control of germination by inhibition of endogenous cysteine proteinases. May play a role in defense by inhibiting exogenous proteases such as those present in digestive tracks of insects and nematodes. This is Cysteine proteinase inhibitor 1 from Oryza sativa subsp. japonica (Rice).